The sequence spans 158 residues: NADH-quinone oxidoreductase subunit B (158 aa).

Cys37, Cys38, Cys102, and Cys132 together coordinate [4Fe-4S] cluster.

This sequence belongs to the complex I 20 kDa subunit family. NDH-1 is composed of 14 different subunits. Subunits NuoB, C, D, E, F, and G constitute the peripheral sector of the complex. [4Fe-4S] cluster serves as cofactor.

The protein localises to the cell inner membrane. It carries out the reaction a quinone + NADH + 5 H(+)(in) = a quinol + NAD(+) + 4 H(+)(out). Its function is as follows. NDH-1 shuttles electrons from NADH, via FMN and iron-sulfur (Fe-S) centers, to quinones in the respiratory chain. Couples the redox reaction to proton translocation (for every two electrons transferred, four hydrogen ions are translocated across the cytoplasmic membrane), and thus conserves the redox energy in a proton gradient. The chain is NADH-quinone oxidoreductase subunit B from Hydrogenovibrio crunogenus (strain DSM 25203 / XCL-2) (Thiomicrospira crunogena).